We begin with the raw amino-acid sequence, 444 residues long: Putative methylesterase 13, chloroplastic (444 aa).

Disordered stretches follow at residues 1-32, 49-90, and 124-176; these read MGNSFTCISHEQEQRPKKSSGGGGNNSGKYKY, PSLS…KDSH, and SVVY…QLVD. The N-terminal 60 residues, 1 to 60, are a transit peptide targeting the chloroplast; sequence MGNSFTCISHEQEQRPKKSSGGGGNNSGKYKYVRRLSLMPSFRRRTLLPSLSCSGSSSTS. A compositionally biased stretch (low complexity) spans 49–64; the sequence is PSLSCSGSSSTSSSKK. A compositionally biased stretch (basic residues) spans 65-82; it reads GGIKAKTKKIRERHHHHH. The span at 124 to 148 shows a compositional bias: polar residues; that stretch reads SVVYPSAQPSGTSSGPVSAVQTPKK. A compositionally biased stretch (low complexity) spans 149–164; that stretch reads SSAGFVRSSSSRQRSS. The AB hydrolase-1 domain occupies 190–310; the sequence is FVLVHGGGFG…LFNQQLGSND (121 aa). The active-site Acyl-ester intermediate is Asp-264. Active-site charge relay system residues include Asp-390 and His-418.

The protein belongs to the AB hydrolase superfamily. Methylesterase family.

It localises to the plastid. Its subcellular location is the chloroplast. Functionally, putative methylesterase. In Arabidopsis thaliana (Mouse-ear cress), this protein is Putative methylesterase 13, chloroplastic.